The chain runs to 253 residues: Trans-aconitate 2-methyltransferase (253 aa).

Belongs to the methyltransferase superfamily. Tam family.

It localises to the cytoplasm. It catalyses the reaction trans-aconitate + S-adenosyl-L-methionine = (E)-3-(methoxycarbonyl)pent-2-enedioate + S-adenosyl-L-homocysteine. Functionally, catalyzes the S-adenosylmethionine monomethyl esterification of trans-aconitate. This chain is Trans-aconitate 2-methyltransferase, found in Azoarcus sp. (strain BH72).